Consider the following 517-residue polypeptide: Crotonobetaine/carnitine--CoA ligase (517 aa).

Belongs to the ATP-dependent AMP-binding enzyme family.

It carries out the reaction 4-(trimethylamino)butanoate + ATP + CoA = 4-(trimethylamino)butanoyl-CoA + AMP + diphosphate. It catalyses the reaction crotonobetaine + ATP + CoA = crotonobetainyl-CoA + AMP + diphosphate. The enzyme catalyses (R)-carnitine + ATP + CoA = (R)-carnitinyl-CoA + AMP + diphosphate. Its pathway is amine and polyamine metabolism; carnitine metabolism. Its function is as follows. Catalyzes the transfer of CoA to carnitine, generating the initial carnitinyl-CoA needed for the CaiB reaction cycle. Also has activity toward crotonobetaine and gamma-butyrobetaine. The polypeptide is Crotonobetaine/carnitine--CoA ligase (Citrobacter koseri (strain ATCC BAA-895 / CDC 4225-83 / SGSC4696)).